Here is a 360-residue protein sequence, read N- to C-terminus: Proline-rich protein 11 (360 aa).

Disordered regions lie at residues 20-43 and 174-201; these read KKKEASHFQSKLITPPPPPPSPER and PPTLPQPASHFPPPPPPPPLPPPPPPLA. A Phosphothreonine modification is found at T33. S40 bears the Phosphoserine mark. A compositionally biased stretch (pro residues) spans 175–201; that stretch reads PTLPQPASHFPPPPPPPPLPPPPPPLA. Residues 285-291 carry the Phosphodegron motif; it reads LITPGKS. T287 carries the phosphothreonine modification. Position 291 is a phosphoserine (S291). The D-box signature appears at 296–304; the sequence is RKLLRKVDV. The short motif at 316–318 is the KEN box element; the sequence is KEN. The Phosphodegron motif lies at 325-330; that stretch reads LTPVMT. The interval 340-360 is disordered; that stretch reads AHPRSPTPTLPLSTSSFDEQN. Phosphoserine is present on S344. 2 positions are modified to phosphothreonine: T346 and T348. Positions 349 to 360 are enriched in low complexity; it reads LPLSTSSFDEQN.

Ubiquitinated. Rapidly degraded by the proteasome; degradation may involve FBXW7-specific phosphorylated phosphodegron motifs. In terms of tissue distribution, ubiquitously expressed.

It localises to the cytoplasm. The protein localises to the nucleus. Its function is as follows. Plays a critical role in cell cycle progression. This Homo sapiens (Human) protein is Proline-rich protein 11 (PRR11).